A 362-amino-acid chain; its full sequence is Nuclear hormone receptor family member nhr-77 (362 aa).

The segment at residues 8–82 (DPICPVCEFP…AGMKRNLVKQ (75 aa)) is a DNA-binding region (nuclear receptor). 2 NR C4-type zinc fingers span residues 11–32 (CPVCEFPSNVELHFGGLVCGAC) and 48–69 (CEKNNQCKGMRKNCRACRFDYC). The NR LBD domain occupies 145–362 (EAEKDVSKIL…KLYIQLGLPF (218 aa)).

Belongs to the nuclear hormone receptor family.

It is found in the nucleus. Functionally, orphan nuclear receptor. In Caenorhabditis elegans, this protein is Nuclear hormone receptor family member nhr-77 (nhr-77).